The chain runs to 388 residues: Dual-specificity RNA methyltransferase RlmN (388 aa).

E109 serves as the catalytic Proton acceptor. Positions 115–354 constitute a Radical SAM core domain; that stretch reads EDDRATLCVS…TIVRKTRGDD (240 aa). C122 and C359 are disulfide-bonded. The [4Fe-4S] cluster site is built by C129, C133, and C136. Residues 183–184, S215, 237–239, and N316 contribute to the S-adenosyl-L-methionine site; these read GE and SLH. Residue C359 is the S-methylcysteine intermediate of the active site.

Belongs to the radical SAM superfamily. RlmN family. [4Fe-4S] cluster is required as a cofactor.

Its subcellular location is the cytoplasm. It catalyses the reaction adenosine(2503) in 23S rRNA + 2 reduced [2Fe-2S]-[ferredoxin] + 2 S-adenosyl-L-methionine = 2-methyladenosine(2503) in 23S rRNA + 5'-deoxyadenosine + L-methionine + 2 oxidized [2Fe-2S]-[ferredoxin] + S-adenosyl-L-homocysteine. It carries out the reaction adenosine(37) in tRNA + 2 reduced [2Fe-2S]-[ferredoxin] + 2 S-adenosyl-L-methionine = 2-methyladenosine(37) in tRNA + 5'-deoxyadenosine + L-methionine + 2 oxidized [2Fe-2S]-[ferredoxin] + S-adenosyl-L-homocysteine. Its function is as follows. Specifically methylates position 2 of adenine 2503 in 23S rRNA and position 2 of adenine 37 in tRNAs. m2A2503 modification seems to play a crucial role in the proofreading step occurring at the peptidyl transferase center and thus would serve to optimize ribosomal fidelity. This chain is Dual-specificity RNA methyltransferase RlmN, found in Cronobacter sakazakii (strain ATCC BAA-894) (Enterobacter sakazakii).